Here is a 20-residue protein sequence, read N- to C-terminus: Brevinin-1LT (20 aa).

Residues cysteine 14 and cysteine 20 are joined by a disulfide bond.

As to expression, expressed by the skin glands.

The protein resides in the secreted. Functionally, antimicrobial peptide. The polypeptide is Brevinin-1LT (Rana latastei (Italian agile frog)).